A 104-amino-acid chain; its full sequence is Large ribosomal subunit protein bL21 (104 aa).

The protein belongs to the bacterial ribosomal protein bL21 family. As to quaternary structure, part of the 50S ribosomal subunit. Contacts protein L20.

This protein binds to 23S rRNA in the presence of protein L20. This chain is Large ribosomal subunit protein bL21, found in Desulfosudis oleivorans (strain DSM 6200 / JCM 39069 / Hxd3) (Desulfococcus oleovorans).